The primary structure comprises 158 residues: NAD(P)H-quinone oxidoreductase subunit N (158 aa).

It belongs to the complex I NdhN subunit family. In terms of assembly, NDH-1 can be composed of about 15 different subunits; different subcomplexes with different compositions have been identified which probably have different functions.

It localises to the cellular thylakoid membrane. The enzyme catalyses a plastoquinone + NADH + (n+1) H(+)(in) = a plastoquinol + NAD(+) + n H(+)(out). It carries out the reaction a plastoquinone + NADPH + (n+1) H(+)(in) = a plastoquinol + NADP(+) + n H(+)(out). NDH-1 shuttles electrons from an unknown electron donor, via FMN and iron-sulfur (Fe-S) centers, to quinones in the respiratory and/or the photosynthetic chain. The immediate electron acceptor for the enzyme in this species is believed to be plastoquinone. Couples the redox reaction to proton translocation, and thus conserves the redox energy in a proton gradient. Cyanobacterial NDH-1 also plays a role in inorganic carbon-concentration. This chain is NAD(P)H-quinone oxidoreductase subunit N, found in Trichodesmium erythraeum (strain IMS101).